We begin with the raw amino-acid sequence, 207 residues long: Ribosomal RNA small subunit methyltransferase G (207 aa).

S-adenosyl-L-methionine contacts are provided by residues glycine 75, phenylalanine 80, leucine 126–glutamate 127, and arginine 140.

It belongs to the methyltransferase superfamily. RNA methyltransferase RsmG family.

Its subcellular location is the cytoplasm. It catalyses the reaction guanosine(527) in 16S rRNA + S-adenosyl-L-methionine = N(7)-methylguanosine(527) in 16S rRNA + S-adenosyl-L-homocysteine. Specifically methylates the N7 position of guanine in position 527 of 16S rRNA. This chain is Ribosomal RNA small subunit methyltransferase G, found in Erythrobacter litoralis (strain HTCC2594).